A 290-amino-acid chain; its full sequence is Enoyl-CoA hydratase, mitochondrial (290 aa).

The N-terminal 29 residues, 1–29 (MAALRALLPRACNSLLSPVRCPEFRRFAS), are a transit peptide targeting the mitochondrion. 98 to 101 (ADIK) is a binding site for substrate. N6-acetyllysine; alternate is present on residues Lys-101 and Lys-115. N6-succinyllysine; alternate is present on residues Lys-101 and Lys-115. Residue Gly-141 participates in substrate binding. Position 204 is an N6-succinyllysine (Lys-204). N6-acetyllysine is present on Lys-211.

It belongs to the enoyl-CoA hydratase/isomerase family. As to quaternary structure, homohexamer; dimer of trimers. In terms of tissue distribution, detected in liver (at protein level).

It localises to the mitochondrion matrix. The catalysed reaction is a (3S)-3-hydroxyacyl-CoA = a (2E)-enoyl-CoA + H2O. The enzyme catalyses a (3E)-enoyl-CoA = a 4-saturated (2E)-enoyl-CoA. It carries out the reaction (3E)-hexenoyl-CoA = (2E)-hexenoyl-CoA. It catalyses the reaction (3S)-3-hydroxybutanoyl-CoA = (2E)-butenoyl-CoA + H2O. The catalysed reaction is 3-hydroxyisovaleryl-CoA = 3-methylbut-2-enoyl-CoA + H2O. The enzyme catalyses 3-hydroxypropanoyl-CoA = acryloyl-CoA + H2O. It carries out the reaction 3-hydroxybutanoyl-CoA = (2E)-butenoyl-CoA + H2O. It catalyses the reaction 2-methylpropenoyl-CoA + H2O = (S)-3-hydroxyisobutanoyl-CoA. The catalysed reaction is (3S)-hydroxyhexanoyl-CoA = (2E)-hexenoyl-CoA + H2O. The enzyme catalyses (3S)-hydroxydecanoyl-CoA = (2E)-decenoyl-CoA + H2O. It functions in the pathway lipid metabolism; fatty acid beta-oxidation. Functionally, converts unsaturated trans-2-enoyl-CoA species ((2E)-enoyl-CoA) to the corresponding 3(S)-3-hydroxyacyl-CoA species through addition of a water molecule to the double bond. Catalyzes the hydration of medium- and short-chained fatty enoyl-CoA thioesters from 4 carbons long (C4) up to C16. Has high substrate specificity for crotonyl-CoA ((2E)-butenoyl-CoA) and moderate specificity for acryloyl-CoA, 3-methylcrotonyl-CoA (3-methyl-(2E)-butenoyl-CoA) and methacrylyl-CoA ((2E)-2-methylpropenoyl-CoA). Can bind tiglyl-CoA (2-methylcrotonoyl-CoA), but hydrates only a small amount of this substrate. Plays a key role in the beta-oxidation spiral of short- and medium-chain fatty acid oxidation. At a lower rate than the hydratase reaction, catalyzes the isomerase reaction of trans-3-enoyl-CoA species (such as (3E)-hexenoyl-CoA) to trans-2-enoyl-CoA species (such as (2E)-hexenoyl-CoA), which are subsequently hydrated to 3(S)-3-hydroxyacyl-CoA species (such as (3S)-hydroxyhexanoyl-CoA). This chain is Enoyl-CoA hydratase, mitochondrial, found in Rattus norvegicus (Rat).